The primary structure comprises 421 residues: MEKMHITNQEHDAFVKSHPNGDLLQLTKWAETKKLTGWYARRIAVGRDGEIQGVAQLLFKKVPKLPYTLCYISRGFVVDYSNKEALNALLDSAKEIAKAEKAYAIKIDPDVEVDKGTDALQNLKALGFKHKGFKEGLSKDYIQPRMTMITPIDKNDDELLNSYERRNRSKVRLALKRGTTVERSDREGLKTFAELMKITGERDGFLTRDISYFENIYDALHEDGDAELFLVKLDPKENIAKVNQELNELHAEIAKWQQKMETSEKQAKKAQNMINDAQNKIAKNEDLKRDLEALEKEHPEGIYLSGALLMFAGSKSYYLYGASSNEFRDFLPNHHMQYTMMKYAREHGATTYDFGGTDNDPDKDSEHYGLWAFKKVWGTYLSEKIGEFDYVLNQPLYQLIEQVKPRLTKAKIKISRKLKRK.

It belongs to the FemABX family. Monomer.

It localises to the cytoplasm. It carries out the reaction beta-D-GlcNAc-(1-&gt;4)-Mur2Ac(oyl-L-Ala-D-isoglutaminyl-L-Lys-D-Ala-D-Ala)-di-trans,octa-cis-undecaprenyl diphosphate + glycyl-tRNA(Gly) = beta-D-GlcNAc-(1-&gt;4)-Mur2Ac(oyl-L-Ala-D-isoglutaminyl-L-Lys-(N(6)-Gly)-D-Ala-D-Ala)-di-trans,octa-cis-undecaprenyl diphosphate + tRNA(Gly) + H(+). Its function is as follows. Catalyzes the incorporation of the first glycine of the pentaglycine interpeptide bridge, which is characteristic of the S.aureus peptidoglycan. This glycine is added to the epsilon-amino group of the L-lysine of the membrane-bound lipid II intermediate (GlcNAc-(beta-1,4)-N-acetylmuramic acid(-L-Ala-D-iGln-L-Lys-D-Ala-D-Ala)-pyrophosphoryl-undecaprenol), using glycyl-tRNA(Gly) as donor, in a ribosome-independent mechanism. This chain is Lipid II:glycine glycyltransferase (femX), found in Staphylococcus aureus (strain bovine RF122 / ET3-1).